The following is a 475-amino-acid chain: MGSVGSDNTHIFLVCYPAQGHINPMLRLGKYLAAKGLLVTFSTTEDYGNKMRNANGIVDNHPTPVGNGFIRFEFFDDSLPDPDDPRRTNLEFYVPLLEKVGKELVTGMIKKHGEEGGARVSCLVNNPFIPWVCDVATELGIPCATLWIQSCAVFSAYFHYNAETVKFPTEAEPELDVQLPSTPLLKHDEIPSFLHPFDPYAILGRAILGQFKKLSKSSYILMDTIQELEPEIVEEMSKVCLVKPVGPLFKIPEATNTTIRGDLIKADDCLDWLSSKPPASVVYISFGSIVYLKQEQVDEIAHGLLSSGVSFLWVMRPPRKAAGVDMHVLPEGFLEKVGDNGKLVQWSPQEQVLAHPSLACFLTHCGWNSSVEALTLGVPVVTFPQWGDQVTNAKYLVDVFGVGLRLCRGVAENRLVLRDEVEKCLLEATVGEKAVQLKHNALKWKKVAEEAVAEGGSSQRNLHDFIDEIARTSIA.

The protein belongs to the UDP-glycosyltransferase family.

In Fragaria ananassa (Strawberry), this protein is Putative UDP-glucose glucosyltransferase.